Here is a 157-residue protein sequence, read N- to C-terminus: Probable succinate transporter subunit YjjB (157 aa).

5 helical membrane-spanning segments follow: residues 8–28 (LALM…AMVF), 34–54 (ALPW…LMMS), 55–75 (AGFN…SIGI), 87–107 (VFTV…TAMI), and 129–149 (FLKA…PGLW).

The protein belongs to the ThrE exporter (TC 2.A.79) family. In terms of assembly, the transporter is composed of YjjB and YjjP.

It is found in the cell inner membrane. Involved in succinate export with YjjP. Both proteins are required for export. The protein is Probable succinate transporter subunit YjjB of Salmonella typhi.